The following is a 513-amino-acid chain: MAAAAFGQLNLEEPPPIWGSRSVDCFEKLEQIGEGTYGQVYMAKEIKTGEIVALKKIRMDNEREGFPITAIREIKILKKLHHENVIHLKEIVTSPGRDRDDQGKPDNNKYKGGIYMVFEYMDHDLTGLADRPGLRFTVPQIKCYMKQLLTGLHYCHVNQVLHRDIKGSNLLIDNEGNLKLADFGLARSYSHDHTGNLTNRVITLWYRPPELLLGATKYGPAIDMWSVGCIFAELLNGKPILPGKTENEQLNKIYELCGSPDESNWPGVSKMPWYNQMKSSRPLKRRVREIYRHFDRHALELLEKMLVLDPSQRICAKDALDAEYFWTDPLPCDPKSLPTYESSHEFQTKKKRQQMRHNEEAAKKQKLQHPQQQHSRLPPQQHGVGQSHAAPLWPAGPNHPMNNNAPPPQIPAGGHYYGGKPRGGAPVPNRYPPSGNQTGGYNNQSRGGYSSGAYPPQGRGAPYGAGPRGPSGGYGVGPPNYSQGGGQYGGSGGSGRGQNPMGGARNQQYGWQP.

Positions 26 to 325 (FEKLEQIGEG…AKDALDAEYF (300 aa)) constitute a Protein kinase domain. ATP-binding positions include 32 to 40 (IGEGTYGQV) and K55. Y37 carries the phosphotyrosine modification. D164 (proton acceptor) is an active-site residue. At T198 the chain carries Phosphothreonine. The tract at residues 337-513 (LPTYESSHEF…ARNQQYGWQP (177 aa)) is disordered. A compositionally biased stretch (low complexity) spans 395–404 (AGPNHPMNNN). The segment covering 434-448 (SGNQTGGYNNQSRGG) has biased composition (polar residues). 2 stretches are compositionally biased toward gly residues: residues 461-476 (APYG…GYGV) and 483-496 (QGGG…GSGR).

The protein belongs to the protein kinase superfamily. CMGC Ser/Thr protein kinase family. CDC2/CDKX subfamily. Interacts with CYCT1-3. As to expression, highly expressed in flowers. Expressed in seedlings, roots, rosettes and stems.

It catalyses the reaction L-seryl-[protein] + ATP = O-phospho-L-seryl-[protein] + ADP + H(+). It carries out the reaction L-threonyl-[protein] + ATP = O-phospho-L-threonyl-[protein] + ADP + H(+). The enzyme catalyses [DNA-directed RNA polymerase] + ATP = phospho-[DNA-directed RNA polymerase] + ADP + H(+). The sequence is that of Cyclin-dependent kinase C-2 (CDKC-2) from Arabidopsis thaliana (Mouse-ear cress).